The sequence spans 1065 residues: DNA ligase 4 (1065 aa).

Residues 1–20 (MAVHAPYNHAPPPTQEINGQ) form a disordered region. Glu-295, Lys-297, Leu-298, Arg-302, Glu-357, Phe-387, Glu-452, Lys-457, Lys-474, and Lys-476 together coordinate ATP. Lys-297 acts as the N6-AMP-lysine intermediate in catalysis. Glu-357 is a Mg(2+) binding site. Glu-452 is a Mg(2+) binding site. The 80-residue stretch at 696–775 (VETSIFSDMT…TALPFLKEFL (80 aa)) folds into the BRCT 1 domain. A disordered region spans residues 825 to 928 (GEDKDEIDVE…SDVGVNGDDY (104 aa)). Composition is skewed to basic and acidic residues over residues 834 to 864 (EESR…KKLQ) and 886 to 900 (MSLK…ERSR). A BRCT 2 domain is found at 954 to 1064 (DEDRIFYHLA…TLLDEDLYKP (111 aa)).

The protein belongs to the ATP-dependent DNA ligase family. Requires Mg(2+) as cofactor.

Its subcellular location is the nucleus. The enzyme catalyses ATP + (deoxyribonucleotide)n-3'-hydroxyl + 5'-phospho-(deoxyribonucleotide)m = (deoxyribonucleotide)n+m + AMP + diphosphate.. Its function is as follows. DNA ligase involved in DNA non-homologous end joining (NHEJ); required for double-strand break (DSB) repair. The protein is DNA ligase 4 (LIG4) of Cryptococcus neoformans var. neoformans serotype D (strain B-3501A) (Filobasidiella neoformans).